We begin with the raw amino-acid sequence, 306 residues long: Grixazone synthase (306 aa).

Cu(2+)-binding residues include H39, H58, H67, H222, H226, and H248.

This sequence belongs to the tyrosinase family. The cofactor is Cu(2+).

It catalyses the reaction 2 3-amino-4-hydroxybenzoate + N-acetyl-L-cysteine + 2 O2 + H(+) = grixazone B + CO2 + 4 H2O. It carries out the reaction 2 3-amino-4-hydroxybenzaldehyde + N-acetyl-L-cysteine + 2 O2 = grixazone A + formate + 3 H2O + H(+). The enzyme catalyses 4 2-aminophenol + 3 O2 = 2 2-aminophenoxazin-3-one + 6 H2O. Its activity is regulated as follows. Inhibited by 3-amino-4-hydroxybenzensulfonic acid, 4-hydroxy-3-nitrobenzaldehyde, L-tyrosine, p-hydroxybenzaldehyde. Activated by the copper chaperone GriE. In terms of biological role, involved in the biosynthesis of the parasiticide antibiotic grixazone. Catalyzes the oxidation of 3-amino-4-hydroxybenzoate (3,4-AHBOA) to yield the corresponding quinone imine which is then non-enzymatically conjugated with the thiol group of N-acetylcysteine. The resultant compound is oxidized to its quinone imine enzymatically and is then dimerized non-enzymatically with another quinone imine oxidized by GriF to yield grixazone B. 3-amino-4-hydroxybenzaldehyde (3,4-AHBAL) can also be used as substrate to yield grixazone A. In the grixazone biosynthetic pathway, it can also function as an o-aminophenol oxidase that catalyzes the formation of the phenoxazinone chromophore from alpha-aminophenol. It can also use 2-amino-4-methylphenol, and to a lesser extent, 3,4-dihydroxybenzaldehyde, catechol and 3,4-dihydroxy-L-phenylalanine (L-DOPA) as substrates. In contrast to tyrosinases, it does not display monophenolase activity. This is Grixazone synthase from Streptomyces griseus subsp. griseus (strain JCM 4626 / CBS 651.72 / NBRC 13350 / KCC S-0626 / ISP 5235).